We begin with the raw amino-acid sequence, 180 residues long: Fucolectin-3 (180 aa).

Residues Met-1–Ser-22 form the signal peptide. The interval Gln-31–Pro-179 is F5/8 type C-like. Ca(2+) is bound by residues Asn-58, Asp-61, Asn-63, and Ser-72. 3 disulfide bridges follow: Cys-73–Cys-168, Cys-104–Cys-105, and Cys-130–Cys-146. 2 residues coordinate alpha-L-fucose: His-75 and Arg-101. The Cell attachment site motif lies at Arg-101–Asp-103. Arg-108 is a binding site for alpha-L-fucose. Ca(2+)-binding residues include Cys-168 and Glu-169.

The protein belongs to the fucolectin family. In terms of assembly, homotrimer. Parenchymal hepatocytes.

It is found in the secreted. The protein localises to the extracellular space. Its function is as follows. Acts as a defensive agent. Recognizes blood group fucosylated oligosaccharides including A, B, H and Lewis B-type antigens. Does not recognize Lewis A antigen and has low affinity for monovalent haptens. The chain is Fucolectin-3 from Anguilla japonica (Japanese eel).